The chain runs to 446 residues: 3-phosphoshikimate 1-carboxyvinyltransferase (446 aa).

The segment at 1-20 (MIMAKPLSSRRAAPLAGSAP) is disordered. The 3-phosphoshikimate site is built by lysine 25, serine 26, and arginine 30. Lysine 25 contacts phosphoenolpyruvate. The phosphoenolpyruvate site is built by glycine 98 and arginine 126. Residues serine 171, glutamine 173, aspartate 324, and lysine 351 each coordinate 3-phosphoshikimate. Glutamine 173 serves as a coordination point for phosphoenolpyruvate. Residue aspartate 324 is the Proton acceptor of the active site. Phosphoenolpyruvate is bound by residues arginine 355 and arginine 399.

Belongs to the EPSP synthase family. Monomer.

It is found in the cytoplasm. It catalyses the reaction 3-phosphoshikimate + phosphoenolpyruvate = 5-O-(1-carboxyvinyl)-3-phosphoshikimate + phosphate. The protein operates within metabolic intermediate biosynthesis; chorismate biosynthesis; chorismate from D-erythrose 4-phosphate and phosphoenolpyruvate: step 6/7. In terms of biological role, catalyzes the transfer of the enolpyruvyl moiety of phosphoenolpyruvate (PEP) to the 5-hydroxyl of shikimate-3-phosphate (S3P) to produce enolpyruvyl shikimate-3-phosphate and inorganic phosphate. In Paramagnetospirillum magneticum (strain ATCC 700264 / AMB-1) (Magnetospirillum magneticum), this protein is 3-phosphoshikimate 1-carboxyvinyltransferase.